A 286-amino-acid chain; its full sequence is Glycine--tRNA ligase alpha subunit (286 aa).

It belongs to the class-II aminoacyl-tRNA synthetase family. In terms of assembly, tetramer of two alpha and two beta subunits.

It is found in the cytoplasm. It catalyses the reaction tRNA(Gly) + glycine + ATP = glycyl-tRNA(Gly) + AMP + diphosphate. The protein is Glycine--tRNA ligase alpha subunit (glyQ) of Thermotoga maritima (strain ATCC 43589 / DSM 3109 / JCM 10099 / NBRC 100826 / MSB8).